The chain runs to 250 residues: Gamma-secretase subunit APH1-like (250 aa).

Helical transmembrane passes span 5-25 (AGIG…VSVI), 29-49 (PFLI…LIIL), 57-77 (LPLK…SVCF), 116-136 (IALA…CLSL), 157-177 (FLIS…SMVI), 191-211 (IIVP…FASE), and 212-232 (GCVI…VHCG).

Belongs to the APH-1 family. In terms of assembly, probable component of the gamma-secretase complex, a complex composed of a presenilin homodimer, nicastrin, APH1 and PEN2.

Its subcellular location is the membrane. Functionally, probable subunit of the gamma-secretase complex, an endoprotease complex that catalyzes the intramembrane cleavage of integral proteins such as Notch receptors. This chain is Gamma-secretase subunit APH1-like, found in Arabidopsis thaliana (Mouse-ear cress).